Consider the following 478-residue polypeptide: UDP-N-acetylmuramate--L-alanine ligase (478 aa).

126 to 132 provides a ligand contact to ATP; that stretch reads GTHGKTT.

Belongs to the MurCDEF family.

It localises to the cytoplasm. It carries out the reaction UDP-N-acetyl-alpha-D-muramate + L-alanine + ATP = UDP-N-acetyl-alpha-D-muramoyl-L-alanine + ADP + phosphate + H(+). It functions in the pathway cell wall biogenesis; peptidoglycan biosynthesis. Functionally, cell wall formation. The polypeptide is UDP-N-acetylmuramate--L-alanine ligase (Mycolicibacterium vanbaalenii (strain DSM 7251 / JCM 13017 / BCRC 16820 / KCTC 9966 / NRRL B-24157 / PYR-1) (Mycobacterium vanbaalenii)).